A 298-amino-acid polypeptide reads, in one-letter code: HTH-type transcriptional regulator ArgP (298 aa).

Positions 4–60 (LDYRWIEALDSVVSKGSFERAAEQLFISQSAVSQRIKQLEKYLAQPVLIREQPPRPT) constitute an HTH lysR-type domain. The segment at residues 21-40 (FERAAEQLFISQSAVSQRIK) is a DNA-binding region (H-T-H motif).

This sequence belongs to the LysR transcriptional regulatory family. As to quaternary structure, homodimer.

Functionally, controls the transcription of genes involved in arginine and lysine metabolism. The protein is HTH-type transcriptional regulator ArgP of Vibrio cholerae serotype O1 (strain ATCC 39315 / El Tor Inaba N16961).